A 239-amino-acid chain; its full sequence is Phosphoribosylaminoimidazole-succinocarboxamide synthase (239 aa).

Belongs to the SAICAR synthetase family.

The enzyme catalyses 5-amino-1-(5-phospho-D-ribosyl)imidazole-4-carboxylate + L-aspartate + ATP = (2S)-2-[5-amino-1-(5-phospho-beta-D-ribosyl)imidazole-4-carboxamido]succinate + ADP + phosphate + 2 H(+). The protein operates within purine metabolism; IMP biosynthesis via de novo pathway; 5-amino-1-(5-phospho-D-ribosyl)imidazole-4-carboxamide from 5-amino-1-(5-phospho-D-ribosyl)imidazole-4-carboxylate: step 1/2. The protein is Phosphoribosylaminoimidazole-succinocarboxamide synthase of Campylobacter hominis (strain ATCC BAA-381 / DSM 21671 / CCUG 45161 / LMG 19568 / NCTC 13146 / CH001A).